The primary structure comprises 190 residues: Apolipoprotein M (190 aa).

Positions 1-17 (MFHQVWAALLYLYGLLF) are cleaved as a signal peptide. 3 disulfide bridges follow: Cys23/Cys169, Cys95/Cys185, and Cys130/Cys159. 2 residues coordinate tetradecanoate: Glu138 and Arg145.

It belongs to the calycin superfamily. Lipocalin family. Highly divergent. Interacts with LRP2; LRP2 mediates APOM renal uptake and subsequent lysosomal degradation. As to expression, expressed by the liver; secreted in plasma.

The protein localises to the secreted. Probably involved in lipid transport. Can bind sphingosine-1-phosphate, myristic acid, palmitic acid and stearic acid, retinol, all-trans-retinoic acid and 9-cis-retinoic acid. This is Apolipoprotein M (Apom) from Rattus norvegicus (Rat).